A 447-amino-acid polypeptide reads, in one-letter code: Acyl-CoA (8-3)-desaturase (447 aa).

Position 1 is an N-acetylmethionine (Met-1). The Cytoplasmic segment spans residues 1–124 (MAPDPVPTPG…FRELRATVER (124 aa)). One can recognise a Cytochrome b5 heme-binding domain in the interval 19 to 97 (TRYFTWEEVA…MNSLLIGELA (79 aa)). A helical transmembrane segment spans residues 125–145 (MGLMKANHLFFLVYLLHILLL). Residues 146 to 160 (DVAAWLTLWIFGTSL) are Lumenal-facing. The helical transmembrane segment at 161–180 (VPFILCAVLLSTVQAQAGWL) threads the bilayer. Residues 181–268 (QHDFGHLSVF…HMPYNHQHKY (88 aa)) lie on the Cytoplasmic side of the membrane. A Histidine box-1 motif is present at residues 182 to 186 (HDFGH). The Histidine box-2 motif lies at 219–223 (HFQHH). Residues 269–289 (FFLIGPPALLPLYFQWYIFYF) traverse the membrane as a helical segment. The Lumenal segment spans residues 290 to 308 (VVQRKKWVDLAWMLSFYAR). The helical transmembrane segment at 309–329 (IFFTYMPLLGLKGFLGLFFIV) threads the bilayer. Residues 330 to 447 (RFLESNWFVW…QLWLDAYLHQ (118 aa)) are Cytoplasmic-facing. The Histidine box-3 motif lies at 385–389 (QIEHH).

It belongs to the fatty acid desaturase type 1 family. As to expression, highly expressed in the adrenal gland, liver, brain, and testis, tissues where lipogenesis and steroidogenesis are active. Expressed in colonic mucosa.

Its subcellular location is the endoplasmic reticulum membrane. The protein resides in the mitochondrion. It carries out the reaction (8Z,11Z,14Z)-eicosatrienoyl-CoA + 2 Fe(II)-[cytochrome b5] + O2 + 2 H(+) = (5Z,8Z,11Z,14Z)-eicosatetraenoyl-CoA + 2 Fe(III)-[cytochrome b5] + 2 H2O. The enzyme catalyses (8Z,11Z,14Z,17Z)-eicosatetraenoyl-CoA + 2 Fe(II)-[cytochrome b5] + O2 + 2 H(+) = (5Z,8Z,11Z,14Z,17Z)-eicosapentaenoyl-CoA + 2 Fe(III)-[cytochrome b5] + 2 H2O. The catalysed reaction is (11E)-octadecenoyl-CoA + 2 Fe(II)-[cytochrome b5] + O2 + 2 H(+) = (5Z,11E)-octadecadienoyl-CoA + 2 Fe(III)-[cytochrome b5] + 2 H2O. It functions in the pathway lipid metabolism; polyunsaturated fatty acid biosynthesis. Acts as a front-end fatty acyl-coenzyme A (CoA) desaturase that introduces a cis double bond at carbon 5 located between a preexisting double bond and the carboxyl end of the fatty acyl chain. Involved in biosynthesis of highly unsaturated fatty acids (HUFA) from the essential polyunsaturated fatty acids (PUFA) linoleic acid (LA) (18:2n-6) and alpha-linolenic acid (ALA) (18:3n-3) precursors. Specifically, desaturates dihomo-gamma-linoleoate (DGLA) (20:3n-6) and eicosatetraenoate (ETA) (20:4n-3) to generate arachidonate (AA) (20:4n-6) and eicosapentaenoate (EPA) (20:5n-3), respectively. As a rate limiting enzyme for DGLA (20:3n-6) and AA (20:4n-6)-derived eicosanoid biosynthesis, controls the metabolism of inflammatory lipids like prostaglandin E2, critical for efficient acute inflammatory response and maintenance of epithelium homeostasis. Contributes to membrane phospholipid biosynthesis by providing AA (20:4n-6) as a major acyl chain esterified into phospholipids. In particular, regulates phosphatidylinositol-4,5-bisphosphate levels, modulating inflammatory cytokine production in T-cells. Also desaturates (11E)-octadecenoate (trans-vaccenoate)(18:1n-9), a metabolite in the biohydrogenation pathway of LA (18:2n-6). This chain is Acyl-CoA (8-3)-desaturase, found in Mus musculus (Mouse).